We begin with the raw amino-acid sequence, 320 residues long: Malate dehydrogenase (320 aa).

NAD(+)-binding positions include Gly-10–Gly-15 and Asp-34. The substrate site is built by Arg-83 and Arg-89. Residues Asn-96 and Ile-119–Asn-121 each bind NAD(+). Substrate is bound by residues Asn-121 and Arg-152. Residue His-176 is the Proton acceptor of the active site.

Belongs to the LDH/MDH superfamily. MDH type 3 family.

The enzyme catalyses (S)-malate + NAD(+) = oxaloacetate + NADH + H(+). Catalyzes the reversible oxidation of malate to oxaloacetate. The sequence is that of Malate dehydrogenase from Cereibacter sphaeroides (strain ATCC 17029 / ATH 2.4.9) (Rhodobacter sphaeroides).